Consider the following 326-residue polypeptide: (+)-T-muurolol synthase ((2E,6E)-farnesyl diphosphate cyclizing) (326 aa).

Mg(2+) is bound by residues D81 and D85. Positions 81–85 match the DDXXD motif motif; sequence DDQCD. R175 contributes to the substrate binding site. Residues N221 and S225 each contribute to the Mg(2+) site. K228 contacts substrate. Residue E229 participates in Mg(2+) binding. Residue 309–310 participates in substrate binding; the sequence is RY.

Belongs to the terpene synthase family. The cofactor is Mg(2+).

The catalysed reaction is (2E,6E)-farnesyl diphosphate + H2O = (+)-T-muurolol + diphosphate. It functions in the pathway secondary metabolite biosynthesis; terpenoid biosynthesis. In terms of biological role, catalyzes the conversion of (2E,6E)-farnesyl diphosphate (FPP) into (+)-T-muurolol via a 1,10-cyclization, which requires isomerization of FPP to nerolidyl diphosphate (NPP) and then abstraction of the pyrophosphate from intermediate NPP leading to a (E,Z)-germacradienyl (helminthogermacradienyl) cation. The chain is (+)-T-muurolol synthase ((2E,6E)-farnesyl diphosphate cyclizing) from Roseiflexus castenholzii (strain DSM 13941 / HLO8).